Reading from the N-terminus, the 165-residue chain is Pyruvoyl-dependent arginine decarboxylase (165 aa).

Serine 53 is subject to Pyruvic acid (Ser).

This sequence belongs to the PdaD family. As to quaternary structure, trimer of an alpha-beta dimer. It depends on pyruvate as a cofactor.

It catalyses the reaction L-arginine + H(+) = agmatine + CO2. In Methanocaldococcus jannaschii (strain ATCC 43067 / DSM 2661 / JAL-1 / JCM 10045 / NBRC 100440) (Methanococcus jannaschii), this protein is Pyruvoyl-dependent arginine decarboxylase (pdaD).